Reading from the N-terminus, the 82-residue chain is Large ribosomal subunit protein bL31 (82 aa).

The protein belongs to the bacterial ribosomal protein bL31 family. Type A subfamily. As to quaternary structure, part of the 50S ribosomal subunit.

In terms of biological role, binds the 23S rRNA. In Rippkaea orientalis (strain PCC 8801 / RF-1) (Cyanothece sp. (strain PCC 8801)), this protein is Large ribosomal subunit protein bL31.